Consider the following 468-residue polypeptide: Cysteine--tRNA ligase (468 aa).

Residue Cys27 participates in Zn(2+) binding. The 'HIGH' region motif lies at 29-39; that stretch reads PTVYDDAHLGH. Residues Cys204, His234, and Glu238 each coordinate Zn(2+). The 'KMSKS' region signature appears at 266–270; sequence KMSKS. Lys269 provides a ligand contact to ATP.

This sequence belongs to the class-I aminoacyl-tRNA synthetase family. As to quaternary structure, monomer. It depends on Zn(2+) as a cofactor.

It is found in the cytoplasm. It catalyses the reaction tRNA(Cys) + L-cysteine + ATP = L-cysteinyl-tRNA(Cys) + AMP + diphosphate. In Campylobacter hominis (strain ATCC BAA-381 / DSM 21671 / CCUG 45161 / LMG 19568 / NCTC 13146 / CH001A), this protein is Cysteine--tRNA ligase.